The chain runs to 179 residues: MSRLREKYEKEVVPALMERFGYKNIMQVPKVEKVVINIGVGEAKENPKALEAAVDDLTMIAGQKPVITRAKRSIANFKIRKGMPIGVKVTLRGERMYEFMDKLFNIALPRVRDFKGVSPNSFDGRGNYALGIKEQLIFPEIDYDKIDKIRGMDIIIVTTAKTDEEAKGLLELLGMPFAK.

This sequence belongs to the universal ribosomal protein uL5 family. Part of the 50S ribosomal subunit; part of the 5S rRNA/L5/L18/L25 subcomplex. Contacts the 5S rRNA and the P site tRNA. Forms a bridge to the 30S subunit in the 70S ribosome.

In terms of biological role, this is one of the proteins that bind and probably mediate the attachment of the 5S RNA into the large ribosomal subunit, where it forms part of the central protuberance. In the 70S ribosome it contacts protein S13 of the 30S subunit (bridge B1b), connecting the 2 subunits; this bridge is implicated in subunit movement. Contacts the P site tRNA; the 5S rRNA and some of its associated proteins might help stabilize positioning of ribosome-bound tRNAs. This Thermoanaerobacter sp. (strain X514) protein is Large ribosomal subunit protein uL5.